The primary structure comprises 621 residues: UvrABC system protein C (621 aa).

The GIY-YIG domain occupies 20–98; it reads TAPGVYRMYA…IKSLTPRYNV (79 aa). The UVR domain occupies 207 to 242; it reads DLLAEELIQAMQVASEHLEFEQAARLRDLLTSLRSM.

The protein belongs to the UvrC family. As to quaternary structure, interacts with UvrB in an incision complex.

The protein resides in the cytoplasm. In terms of biological role, the UvrABC repair system catalyzes the recognition and processing of DNA lesions. UvrC both incises the 5' and 3' sides of the lesion. The N-terminal half is responsible for the 3' incision and the C-terminal half is responsible for the 5' incision. This is UvrABC system protein C from Xylella fastidiosa (strain Temecula1 / ATCC 700964).